A 264-amino-acid polypeptide reads, in one-letter code: Thymidylate synthase (264 aa).

Arginine 21 is a binding site for dUMP. (6R)-5,10-methylene-5,6,7,8-tetrahydrofolate is bound at residue histidine 51. Residue 126 to 127 participates in dUMP binding; sequence RR. Cysteine 146 acts as the Nucleophile in catalysis. Residues 166–169, asparagine 177, and 207–209 each bind dUMP; these read RSAD and HIY. Aspartate 169 contacts (6R)-5,10-methylene-5,6,7,8-tetrahydrofolate. (6R)-5,10-methylene-5,6,7,8-tetrahydrofolate is bound at residue alanine 263.

Belongs to the thymidylate synthase family. Bacterial-type ThyA subfamily. In terms of assembly, homodimer.

The protein resides in the cytoplasm. The enzyme catalyses dUMP + (6R)-5,10-methylene-5,6,7,8-tetrahydrofolate = 7,8-dihydrofolate + dTMP. It participates in pyrimidine metabolism; dTTP biosynthesis. In terms of biological role, catalyzes the reductive methylation of 2'-deoxyuridine-5'-monophosphate (dUMP) to 2'-deoxythymidine-5'-monophosphate (dTMP) while utilizing 5,10-methylenetetrahydrofolate (mTHF) as the methyl donor and reductant in the reaction, yielding dihydrofolate (DHF) as a by-product. This enzymatic reaction provides an intracellular de novo source of dTMP, an essential precursor for DNA biosynthesis. This Ruthia magnifica subsp. Calyptogena magnifica protein is Thymidylate synthase.